The chain runs to 425 residues: Serine--tRNA ligase (425 aa).

Position 230-232 (230-232) interacts with L-serine; it reads TAE. 261–263 serves as a coordination point for ATP; the sequence is RSE. Glutamate 284 contributes to the L-serine binding site. 348 to 351 contacts ATP; sequence EISS. Serine 384 contributes to the L-serine binding site.

It belongs to the class-II aminoacyl-tRNA synthetase family. Type-1 seryl-tRNA synthetase subfamily. Homodimer. The tRNA molecule binds across the dimer.

The protein resides in the cytoplasm. It catalyses the reaction tRNA(Ser) + L-serine + ATP = L-seryl-tRNA(Ser) + AMP + diphosphate + H(+). The enzyme catalyses tRNA(Sec) + L-serine + ATP = L-seryl-tRNA(Sec) + AMP + diphosphate + H(+). The protein operates within aminoacyl-tRNA biosynthesis; selenocysteinyl-tRNA(Sec) biosynthesis; L-seryl-tRNA(Sec) from L-serine and tRNA(Sec): step 1/1. Functionally, catalyzes the attachment of serine to tRNA(Ser). Is also able to aminoacylate tRNA(Sec) with serine, to form the misacylated tRNA L-seryl-tRNA(Sec), which will be further converted into selenocysteinyl-tRNA(Sec). In Streptococcus equi subsp. equi (strain 4047), this protein is Serine--tRNA ligase.